The sequence spans 126 residues: Large ribosomal subunit protein bL12 (126 aa).

The segment covering 107 to 116 (EDAEKAKSQL) has biased composition (basic and acidic residues). Residues 107 to 126 (EDAEKAKSQLEEAGATVELK) are disordered.

The protein belongs to the bacterial ribosomal protein bL12 family. Homodimer. Part of the ribosomal stalk of the 50S ribosomal subunit. Forms a multimeric L10(L12)X complex, where L10 forms an elongated spine to which 2 to 4 L12 dimers bind in a sequential fashion. Binds GTP-bound translation factors.

In terms of biological role, forms part of the ribosomal stalk which helps the ribosome interact with GTP-bound translation factors. Is thus essential for accurate translation. The chain is Large ribosomal subunit protein bL12 from Bifidobacterium adolescentis (strain ATCC 15703 / DSM 20083 / NCTC 11814 / E194a).